A 249-amino-acid polypeptide reads, in one-letter code: Putative TrmH family tRNA/rRNA methyltransferase (249 aa).

Positions 196, 216, and 225 each coordinate S-adenosyl-L-methionine.

This sequence belongs to the class IV-like SAM-binding methyltransferase superfamily. RNA methyltransferase TrmH family.

This Staphylococcus epidermidis (strain ATCC 35984 / DSM 28319 / BCRC 17069 / CCUG 31568 / BM 3577 / RP62A) protein is Putative TrmH family tRNA/rRNA methyltransferase.